The primary structure comprises 496 residues: Probable cytosol aminopeptidase (496 aa).

Residues K266 and D271 each contribute to the Mn(2+) site. K278 is a catalytic residue. D289, D348, and E350 together coordinate Mn(2+). Residue R352 is part of the active site.

Belongs to the peptidase M17 family. The cofactor is Mn(2+).

Its subcellular location is the cytoplasm. It carries out the reaction Release of an N-terminal amino acid, Xaa-|-Yaa-, in which Xaa is preferably Leu, but may be other amino acids including Pro although not Arg or Lys, and Yaa may be Pro. Amino acid amides and methyl esters are also readily hydrolyzed, but rates on arylamides are exceedingly low.. The enzyme catalyses Release of an N-terminal amino acid, preferentially leucine, but not glutamic or aspartic acids.. Its function is as follows. Presumably involved in the processing and regular turnover of intracellular proteins. Catalyzes the removal of unsubstituted N-terminal amino acids from various peptides. The chain is Probable cytosol aminopeptidase from Pseudomonas syringae pv. syringae (strain B728a).